Consider the following 1863-residue polypeptide: Transient receptor potential cation channel subfamily M member 7 (1863 aa).

N-acetylmethionine is present on methionine 1. Topologically, residues 1–850 are cytoplasmic; sequence MSQKSWIEST…ITRKFYAFYH (850 aa). Serine 101 is modified (phosphoserine). Positions 544-555 are enriched in low complexity; it reads NRRSGRNTSSST. The tract at residues 544–574 is disordered; sequence NRRSGRNTSSSTPQLRKSHETFGNRADKKEK. Positions 560-573 are enriched in basic and acidic residues; the sequence is KSHETFGNRADKKE. Residues 851 to 876 traverse the membrane as a helical segment; sequence APIVKFWFNTLAYLGFLMLYTFVVLV. At 877–882 the chain is on the extracellular side; it reads KMEQLP. Residues 883-904 form a helical membrane-spanning segment; the sequence is SVQEWIVIAYIFTYAIEKVREV. Topologically, residues 905–923 are cytoplasmic; that stretch reads FMSEAGKISQKIKVWFSDY. Residues 924–943 traverse the membrane as a helical segment; sequence FNVSDTIAIISFFVGFGLRF. Topologically, residues 944 to 956 are extracellular; sequence GAKWNYINAYDNH. The chain crosses the membrane as a helical span at residues 957-980; it reads VFVAGRLIYCLNIIFWYVRLLDFL. At 981–999 the chain is on the cytoplasmic side; sequence AVNQQAGPYVMMIGKMVAN. The chain crosses the membrane as a helical span at residues 1000-1023; the sequence is MFYIVVIMALVLLSFGVPRKAILY. At 1024–1025 the chain is on the extracellular side; it reads PH. The segment at residues 1026-1066 is an intramembrane region (pore-forming); the sequence is EEPSWSLAKDIVFHPYWMIFGEVYAYEIDVCANDSTLPTIC. Residues 1067 to 1069 are Extracellular-facing; the sequence is GPG. A helical membrane pass occupies residues 1070-1098; that stretch reads TWLTPFLQAVYLFVQYIIMVNLLIAFFNN. At 1099 to 1863 the chain is on the cytoplasmic side; it reads VYLQVKAISN…EATNSVRLML (765 aa). S-palmitoyl cysteine attachment occurs at residues cysteine 1143, cysteine 1144, and cysteine 1146. Residue threonine 1163 is modified to Phosphothreonine. Residues serine 1191, serine 1193, serine 1224, serine 1255, and serine 1258 each carry the phosphoserine modification. Residues 1198 to 1250 are a coiled coil; sequence RVTFERVEQMSIQIKEVGDRVNYIKRSLQSLDSQIGHLQDLSALTVDTLKTLT. Threonine 1265 carries the phosphothreonine modification. A phosphoserine mark is found at serine 1300, serine 1357, serine 1360, serine 1385, serine 1386, serine 1389, serine 1394, serine 1395, and serine 1403. The disordered stretch occupies residues 1380 to 1418; it reads NQKLGSSPNSSPHMSSPPTKFSVSTPSQPSCKSHLESTT. The span at 1385 to 1397 shows a compositional bias: low complexity; sequence SSPNSSPHMSSPP. Residues 1398–1410 show a composition bias toward polar residues; the sequence is TKFSVSTPSQPSC. A Phosphothreonine modification is found at threonine 1404. Phosphoserine occurs at positions 1406 and 1445. The residue at position 1454 (threonine 1454) is a Phosphothreonine. Serine 1455 is modified (phosphoserine). Threonine 1466 and threonine 1470 each carry phosphothreonine. A phosphoserine mark is found at serine 1491, serine 1498, serine 1502, serine 1511, serine 1525, and serine 1531. The tract at residues 1498 to 1539 is disordered; it reads SRRASTEDSPEVDSKAALLPDWLRDRPSNREMPSEGGTLNGL. Over residues 1519-1530 the composition is skewed to basic and acidic residues; it reads WLRDRPSNREMP. At threonine 1535 the chain carries Phosphothreonine. At serine 1541 the chain carries Phosphoserine. Residue threonine 1549 is modified to Phosphothreonine. 2 positions are modified to phosphoserine: serine 1565 and serine 1567. A Phosphothreonine modification is found at threonine 1581. Positions 1592-1822 constitute an Alpha-type protein kinase domain; it reads ILNNSMSSWS…CCRKLKLPDL (231 aa). Phosphoserine occurs at positions 1596 and 1613. ADP-binding residues include glycine 1619, glycine 1620, leucine 1621, arginine 1622, and lysine 1646. Residue serine 1658 is modified to Phosphoserine. Threonine 1683 carries the post-translational modification Phosphothreonine. ADP contacts are provided by glutamate 1718, glutamate 1719, and methionine 1721. Histidine 1751 provides a ligand contact to Zn(2+). Catalysis depends on aspartate 1765, which acts as the Proton acceptor. Aspartate 1775 is an ADP binding site. Residue serine 1777 is modified to Phosphoserine. Zn(2+)-binding residues include histidine 1808, cysteine 1810, and cysteine 1814. Threonine 1828 carries the phosphothreonine modification. The segment at 1838-1863 is disordered; the sequence is ESSDLNLQSGNSTKESEATNSVRLML. Over residues 1841-1863 the composition is skewed to polar residues; that stretch reads DLNLQSGNSTKESEATNSVRLML. Phosphoserine is present on residues serine 1846, serine 1849, and serine 1858.

It in the C-terminal section; belongs to the protein kinase superfamily. Alpha-type protein kinase family. ALPK subfamily. In the N-terminal section; belongs to the transient receptor (TC 1.A.4) family. LTrpC subfamily. TRPM7 sub-subfamily. In terms of assembly, homodimer. Homotetramer. Forms heteromers with TRPM6; heteromeric channels are functionally different from the homomeric channels. Interacts with PLCB1. Zn(2+) serves as cofactor. Post-translationally, palmitoylated; palmitoylation at Cys-1143, Cys-1144 and Cys-1146 promotes TRPM7 trafficking from the Golgi to the surface membrane. Autophosphorylated; autophosphorylation regulates TRPM7 kinase activity towards its substrates. In terms of processing, the C-terminal kinase domain can be cleaved from the channel segment in a cell-type-specific fashion. TRPM7 is cleaved by caspase-8, dissociating the kinase from the ion-conducting pore. The cleaved kinase fragments (M7CKs) can translocate to the cell nucleus and binds chromatin-remodeling complex proteins in a Zn(2+)-dependent manner to ultimately phosphorylate specific Ser/Thr residues of histones. As to expression, found to be expressed in brain and skeletal muscle, with stronger signals in kidney, heart, liver and spleen.

It is found in the cell membrane. It localises to the cytoplasmic vesicle membrane. The protein localises to the nucleus. It carries out the reaction L-seryl-[protein] + ATP = O-phospho-L-seryl-[protein] + ADP + H(+). The catalysed reaction is L-threonyl-[protein] + ATP = O-phospho-L-threonyl-[protein] + ADP + H(+). It catalyses the reaction Mg(2+)(in) = Mg(2+)(out). The enzyme catalyses Ca(2+)(in) = Ca(2+)(out). It carries out the reaction Zn(2+)(in) = Zn(2+)(out). Its activity is regulated as follows. Channel displays constitutive activity. Channel activity is negatively regulated by cytosolic Mg(2+), Mg-ATP and low intracellular pH. Resting free cytosolic Mg(2+) and Mg-ATP concentrations seem to be sufficient to block native TRPM7 channel activity. TRPM7 channel activity is highly dependent on membrane levels of phosphatidylinositol 4,5 bisphosphate (PIP2). PIP2 hydrolysis negatively regulates TRPM7 channel activity. TRPM7 kinase activity does not affect channel activity. The kinase activity is controlled through the autophosphorylation of a serine/threonine-rich region located N-terminal to the catalytic domain. Bifunctional protein that combines an ion channel with an intrinsic kinase domain, enabling it to modulate cellular functions either by conducting ions through the pore or by phosphorylating downstream proteins via its kinase domain. The channel is highly permeable to divalent cations, specifically calcium (Ca2+), magnesium (Mg2+) and zinc (Zn2+) and mediates their influx. Controls a wide range of biological processes such as Ca2(+), Mg(2+) and Zn(2+) homeostasis, vesicular Zn(2+) release channel and intracellular Ca(2+) signaling, embryonic development, immune responses, cell motility, proliferation and differentiation. The C-terminal alpha-kinase domain autophosphorylates cytoplasmic residues of TRPM7. TRPM7 phosphorylates SMAD2, suggesting that TRPM7 kinase may play a role in activating SMAD signaling pathways. In vitro, TRPM7 kinase phosphorylates ANXA1 (annexin A1), myosin II isoforms and a variety of proteins with diverse cellular functions. Functionally, the cleaved channel exhibits substantially higher current and potentiates Fas receptor signaling. In terms of biological role, the C-terminal kinase domain can be cleaved from the channel segment in a cell-type-specific fashion. In immune cells, the TRPM7 kinase domain is clipped from the channel domain by caspases in response to Fas-receptor stimulation. The cleaved kinase fragments can translocate to the nucleus, and bind chromatin-remodeling complex proteins in a Zn(2+)-dependent manner to ultimately phosphorylate specific Ser/Thr residues of histones known to be functionally important for cell differentiation and embryonic development. This chain is Transient receptor potential cation channel subfamily M member 7 (Trpm7), found in Mus musculus (Mouse).